We begin with the raw amino-acid sequence, 290 residues long: 4-hydroxy-tetrahydrodipicolinate synthase (290 aa).

T42 provides a ligand contact to pyruvate. The active-site Proton donor/acceptor is Y129. The active-site Schiff-base intermediate with substrate is K157. I198 lines the pyruvate pocket.

Belongs to the DapA family. Homotetramer; dimer of dimers.

Its subcellular location is the cytoplasm. The catalysed reaction is L-aspartate 4-semialdehyde + pyruvate = (2S,4S)-4-hydroxy-2,3,4,5-tetrahydrodipicolinate + H2O + H(+). It participates in amino-acid biosynthesis; L-lysine biosynthesis via DAP pathway; (S)-tetrahydrodipicolinate from L-aspartate: step 3/4. Functionally, catalyzes the condensation of (S)-aspartate-beta-semialdehyde [(S)-ASA] and pyruvate to 4-hydroxy-tetrahydrodipicolinate (HTPA). This chain is 4-hydroxy-tetrahydrodipicolinate synthase, found in Chlamydia felis (strain Fe/C-56) (Chlamydophila felis).